The primary structure comprises 488 residues: Glutamyl-tRNA(Gln) amidotransferase subunit A (488 aa).

Residues Lys-77 and Ser-152 each act as charge relay system in the active site. The Acyl-ester intermediate role is filled by Ser-176.

It belongs to the amidase family. GatA subfamily. As to quaternary structure, heterotrimer of A, B and C subunits.

It carries out the reaction L-glutamyl-tRNA(Gln) + L-glutamine + ATP + H2O = L-glutaminyl-tRNA(Gln) + L-glutamate + ADP + phosphate + H(+). In terms of biological role, allows the formation of correctly charged Gln-tRNA(Gln) through the transamidation of misacylated Glu-tRNA(Gln) in organisms which lack glutaminyl-tRNA synthetase. The reaction takes place in the presence of glutamine and ATP through an activated gamma-phospho-Glu-tRNA(Gln). This chain is Glutamyl-tRNA(Gln) amidotransferase subunit A, found in Streptococcus pyogenes serotype M2 (strain MGAS10270).